We begin with the raw amino-acid sequence, 492 residues long: Zinc finger protein GLIS2 (492 aa).

The disordered stretch occupies residues 49-101 (VITPICSSPPPGFRYRDGDSPPFSSPPIVDLSLSPPSGTDSPSRSSLSPDRAA). The tract at residues 69–129 (PPFSSPPIVD…SPFQFFLPLG (61 aa)) is transcription activation. Low complexity predominate over residues 82-97 (SPPSGTDSPSRSSLSP). The segment at 138–161 (MFMSPPKENRLSLEFTEQKQLVCQ) is transcription repression. The segment at 158-183 (LVCQWAKCNRLFELLQELVDHVNDFH) adopts a C2H2-type 1 zinc-finger fold. The C2H2-type 2; degenerate zinc finger occupies 192–219 (YCCHWEGCARRGRGFNARYKMLIHIRTH). 3 C2H2-type zinc fingers span residues 225-247 (HCCP…NRSH), 253-277 (YMCP…TRTH), and 283-307 (YYCK…IKAH). Residues 423–444 (VENEKRPKGQRGDSSERTDGSK) are compositionally biased toward basic and acidic residues. The disordered stretch occupies residues 423–450 (VENEKRPKGQRGDSSERTDGSKLRPGSI).

This sequence belongs to the GLI C2H2-type zinc-finger protein family.

The protein localises to the nucleus speckle. Its subcellular location is the cytoplasm. In terms of biological role, can act either as a transcription repressor or as a transcription activator, depending on the cell context. May be involved in neuron differentiation. The sequence is that of Zinc finger protein GLIS2 (glis2) from Xenopus laevis (African clawed frog).